The chain runs to 408 residues: Adenylosuccinate synthetase (408 aa).

GTP is bound by residues 12-18 (GDEGKGK) and 40-42 (GHT). D13 functions as the Proton acceptor in the catalytic mechanism. Residues D13 and G40 each coordinate Mg(2+). IMP-binding positions include 13–16 (DEGK), 38–41 (NAGH), T121, R135, Q213, T228, and R292. The active-site Proton donor is H41. 288–294 (TTTGRPR) is a binding site for substrate. Residues R294, 320 to 322 (KLD), and 393 to 395 (STS) contribute to the GTP site.

Belongs to the adenylosuccinate synthetase family. Homodimer. Mg(2+) serves as cofactor.

Its subcellular location is the cytoplasm. The enzyme catalyses IMP + L-aspartate + GTP = N(6)-(1,2-dicarboxyethyl)-AMP + GDP + phosphate + 2 H(+). It participates in purine metabolism; AMP biosynthesis via de novo pathway; AMP from IMP: step 1/2. Its function is as follows. Plays an important role in the de novo pathway of purine nucleotide biosynthesis. Catalyzes the first committed step in the biosynthesis of AMP from IMP. This chain is Adenylosuccinate synthetase, found in Thermus thermophilus (strain ATCC BAA-163 / DSM 7039 / HB27).